Reading from the N-terminus, the 205-residue chain is Ribosomal RNA small subunit methyltransferase J (205 aa).

Residues 56 to 57 (RD), 72 to 73 (ER), and Asp-124 each bind S-adenosyl-L-methionine.

Belongs to the methyltransferase superfamily. RsmJ family.

The protein resides in the cytoplasm. It carries out the reaction guanosine(1516) in 16S rRNA + S-adenosyl-L-methionine = N(2)-methylguanosine(1516) in 16S rRNA + S-adenosyl-L-homocysteine + H(+). Its function is as follows. Specifically methylates the guanosine in position 1516 of 16S rRNA. The protein is Ribosomal RNA small subunit methyltransferase J of Brucella anthropi (strain ATCC 49188 / DSM 6882 / CCUG 24695 / JCM 21032 / LMG 3331 / NBRC 15819 / NCTC 12168 / Alc 37) (Ochrobactrum anthropi).